Consider the following 404-residue polypeptide: Subtilisin-like protease 3 (404 aa).

The first 20 residues, 1–20, serve as a signal peptide directing secretion; sequence MLFSKSLVALVACFLPLIVS. A propeptide spanning residues 21 to 114 is cleaved from the precursor; the sequence is ATELKLRNAA…VDKDVKVSAY (94 aa). The Inhibitor I9 domain maps to 38 to 112; that stretch reads SYIVVYKDID…AYVDKDVKVS (75 aa). The Peptidase S8 domain occupies 123–404; it reads PWGLDRISHR…DNLAYNDDGY (282 aa). An N-linked (GlcNAc...) asparagine glycan is attached at asparagine 133. Catalysis depends on charge relay system residues aspartate 158 and histidine 190. N-linked (GlcNAc...) asparagine glycans are attached at residues asparagine 243, asparagine 251, asparagine 286, asparagine 307, and asparagine 340. Serine 347 serves as the catalytic Charge relay system. N-linked (GlcNAc...) asparagine glycosylation occurs at asparagine 366.

Belongs to the peptidase S8 family.

It localises to the secreted. In terms of biological role, secreted subtilisin-like serine endopeptidase. Mediates the degradation of collagen, the major structural protein in the mammalian host. Degrades the nonhelical regions of collagen that function in the cross-linking of the helical components. May function as virulence factor involved in epidermal wing necrosis observed in white nose syndrome (WNS) in bats. This chain is Subtilisin-like protease 3, found in Pseudogymnoascus destructans (strain ATCC MYA-4855 / 20631-21) (Bat white-nose syndrome fungus).